The chain runs to 205 residues: Large ribosomal subunit protein uL4 (205 aa).

A disordered region spans residues 65–99 (RQKGTGGARHGSRKSPTFRHGGVYKGPTPRSHGHD).

This sequence belongs to the universal ribosomal protein uL4 family. In terms of assembly, part of the 50S ribosomal subunit.

Its function is as follows. One of the primary rRNA binding proteins, this protein initially binds near the 5'-end of the 23S rRNA. It is important during the early stages of 50S assembly. It makes multiple contacts with different domains of the 23S rRNA in the assembled 50S subunit and ribosome. In terms of biological role, forms part of the polypeptide exit tunnel. The sequence is that of Large ribosomal subunit protein uL4 from Ruegeria pomeroyi (strain ATCC 700808 / DSM 15171 / DSS-3) (Silicibacter pomeroyi).